A 440-amino-acid chain; its full sequence is Histidinol dehydrogenase (440 aa).

NAD(+) is bound by residues Tyr139, Gln201, and Asn224. Residues Ser247, Gln269, and His272 each coordinate substrate. 2 residues coordinate Zn(2+): Gln269 and His272. Active-site proton acceptor residues include Glu337 and His338. Positions 338, 371, 425, and 430 each coordinate substrate. Asp371 is a Zn(2+) binding site. A Zn(2+)-binding site is contributed by His430.

The protein belongs to the histidinol dehydrogenase family. Zn(2+) is required as a cofactor.

The enzyme catalyses L-histidinol + 2 NAD(+) + H2O = L-histidine + 2 NADH + 3 H(+). Its pathway is amino-acid biosynthesis; L-histidine biosynthesis; L-histidine from 5-phospho-alpha-D-ribose 1-diphosphate: step 9/9. Its function is as follows. Catalyzes the sequential NAD-dependent oxidations of L-histidinol to L-histidinaldehyde and then to L-histidine. This Prochlorococcus marinus (strain MIT 9312) protein is Histidinol dehydrogenase.